An 896-amino-acid polypeptide reads, in one-letter code: Zinc finger protein 574 (896 aa).

3 C2H2-type zinc fingers span residues 16 to 38 (YVCS…QNSH), 76 to 98 (YQCL…QELH), and 126 to 148 (YECV…RQTH). Residue Ser164 is modified to Phosphoserine. The segment at 214–236 (YKCSECSQLFQLPADFLEHQATH) adopts a C2H2-type 4 zinc-finger fold. The tract at residues 239–301 (APVPESQEPA…RARRNNSGEA (63 aa)) is disordered. Positions 247-257 (PALQQEVQASS) are enriched in polar residues. Residues 274–287 (HSYELRNGEAIGRD) are compositionally biased toward basic and acidic residues. Phosphoserine is present on Ser298. C2H2-type zinc fingers lie at residues 309–331 (LFCS…LRSH), 336–358 (FKCP…LGDH), 364–386 (FLCV…RRAH), and 392–413 (HSCP…RRTH). Residues 434–460 (FPEPAPAETGEPEAPEPPVSEETSAGP) are disordered. C2H2-type zinc fingers lie at residues 466-489 (YRCL…RFVH), 495-517 (HKCS…LRTH), 523-545 (FPCP…RLTH), 551-573 (YRCG…RLVH), 579-601 (YRCQ…RYHH), and 607-630 (YKCR…LVVH). The segment at 636 to 659 (HRCPSCGAAFPSSLRLREHRCAAA) adopts a C2H2-type 15; degenerate zinc-finger fold. A C2H2-type 16 zinc finger spans residues 667–689 (FECGTCGKKVGSAARLQAHEAAH). The interval 687–733 (AAHAAAGPGEVLAKEPPAPRAPRATRAPVASPAGLGGTATASPAAPA) is disordered. Residues 707 to 732 (APRATRAPVASPAGLGGTATASPAAP) show a composition bias toward low complexity. Ser717 bears the Phosphoserine mark. Residue Thr724 is modified to Phosphothreonine. Position 728 is a phosphoserine (Ser728). 4 C2H2-type zinc fingers span residues 738-760 (LECS…RRIH), 766-788 (YPCP…RRLH), 794-816 (FACE…RRIH), and 822-844 (YSCP…RKTH). Arg832 carries the asymmetric dimethylarginine modification.

Belongs to the krueppel C2H2-type zinc-finger protein family.

It localises to the nucleus. May be involved in transcriptional regulation. This Macaca fascicularis (Crab-eating macaque) protein is Zinc finger protein 574 (ZNF574).